The chain runs to 592 residues: Elongation factor 1 alpha-like protein (592 aa).

Disordered stretches follow at residues 1-35 (MSRHRDVKNLDLDDYELDEEPGEEELTEEQEEEFR) and 78-159 (SSKA…KQNP). Residues 12-32 (LDDYELDEEPGEEELTEEQEE) are compositionally biased toward acidic residues. Residues 82–111 (GAKEKQNTDSQKEKKQNKSKEALADAKDPL) are compositionally biased toward basic and acidic residues. Positions 113–124 (ESSNGIKNLSLN) are enriched in polar residues. The segment covering 137 to 151 (VKMKNSSESDNQPEK) has biased composition (basic and acidic residues). One can recognise a tr-type G domain in the interval 175-401 (KPVVHLVVTG…DQLVPPEKPY (227 aa)). Positions 184–191 (GHVDSGKS) are G1. 184–191 (GHVDSGKS) contributes to the GTP binding site. Residues 240 to 244 (GVTMD) form a G2 region. The interval 261-264 (DAPG) is G3. GTP contacts are provided by residues 323–326 (NKLD) and 352–355 (FKTS). A G4 region spans residues 323-326 (NKLD). Residues 363 to 365 (SAI) form a G5 region.

Belongs to the TRAFAC class translation factor GTPase superfamily. Classic translation factor GTPase family. In terms of assembly, component of the Dom34-Hbs1 complex, also named Pelota-HBS1L complex, composed of dom34 and hbs1.

The protein localises to the cytoplasm. The catalysed reaction is GTP + H2O = GDP + phosphate + H(+). In terms of biological role, GTPase component of the Dom34-Hbs1 complex, a complex that recognizes stalled ribosomes and triggers the No-Go Decay (NGD) pathway. The Dom34-Hbs1 complex recognizes ribosomes stalled at the 3' end of an mRNA and engages stalled ribosomes by destabilizing mRNA in the mRNA channel. Following ribosome-binding, the Pelota-HBS1L complex promotes the disassembly of stalled ribosomes, followed by degradation of damaged mRNAs as part of the NGD pathway. This Schizosaccharomyces pombe (strain 972 / ATCC 24843) (Fission yeast) protein is Elongation factor 1 alpha-like protein.